The following is a 312-amino-acid chain: Olfactory receptor 2L3 (312 aa).

The Extracellular portion of the chain corresponds to M1–L24. A glycan (N-linked (GlcNAc...) asparagine) is linked at N5. A helical transmembrane segment spans residues F25–I48. At F49 to T56 the chain is on the cytoplasmic side. A helical transmembrane segment spans residues P57–P78. The Extracellular segment spans residues K79 to Q99. N-linked (GlcNAc...) asparagine glycosylation occurs at N88. C96 and C188 are disulfide-bonded. Residues S100–Y119 traverse the membrane as a helical segment. Residues D120 to R138 are Cytoplasmic-facing. Residues M139–A157 form a helical membrane-spanning segment. Residues H158 to Y194 are Extracellular-facing. A helical transmembrane segment spans residues E195 to G218. The Cytoplasmic portion of the chain corresponds to R219–K235. Residues A236 to Y258 traverse the membrane as a helical segment. Residues L259–K271 lie on the Extracellular side of the membrane. A helical transmembrane segment spans residues V272–L291. The Cytoplasmic segment spans residues R292–M312.

The protein belongs to the G-protein coupled receptor 1 family.

Its subcellular location is the cell membrane. Odorant receptor. The protein is Olfactory receptor 2L3 (OR2L3) of Homo sapiens (Human).